The following is a 351-amino-acid chain: uncharacterized protein (351 aa).

The segment at 25–67 (KKAETETLPPANSQPAAPAPEAKPTEAPVAKAEAKPETPAQPV) is disordered. Over residues 33-55 (PPANSQPAAPAPEAKPTEAPVAK) the composition is skewed to low complexity.

This is an uncharacterized protein from Escherichia coli (strain K12).